A 186-amino-acid polypeptide reads, in one-letter code: UPF0200 protein Hbut_0338 (186 aa).

Residue 13–20 (GMPGSGKS) participates in ATP binding.

It belongs to the UPF0200 family.

The sequence is that of UPF0200 protein Hbut_0338 from Hyperthermus butylicus (strain DSM 5456 / JCM 9403 / PLM1-5).